We begin with the raw amino-acid sequence, 559 residues long: 3-phosphoinositide-dependent protein kinase 1 (559 aa).

Tyrosine 9 is modified (phosphotyrosine; by SRC and INSR). Serine 25 carries the post-translational modification Phosphoserine. The interval 25–83 (SPSMVRSQTEPGSSPGIPSGVSRQGSTMDGTTAEARPSTNPLQQHPAQLPPQPRKKRPE) is disordered. Residues 35–44 (PGSSPGIPSG) are compositionally biased toward low complexity. Polar residues predominate over residues 45–54 (VSRQGSTMDG). The Protein kinase domain maps to 85 to 345 (FKFGKILGEG…YGPLKAHPFF (261 aa)). ATP contacts are provided by residues 95–97 (SFS) and lysine 114. Residues 116 to 160 (LEKRHIIKENKVPYVTRERDVMSRLDHPFFVKLYFTFQDDEKLYF) form a PIF-pocket region. ATP contacts are provided by residues 163 to 165 (SYA) and glutamate 169. The Proton acceptor role is filled by aspartate 208. 2 residues coordinate ATP: glutamate 212 and aspartate 226. Phosphoserine is present on serine 244. At lysine 307 the chain carries N6-acetyllysine. Threonine 357 carries the phosphothreonine; by MELK modification. 2 positions are modified to phosphotyrosine; by SRC and INSR: tyrosine 376 and tyrosine 379. A Phosphoserine modification is found at serine 396. Residue serine 397 is modified to Phosphoserine; by MAP3K5. Serine 399 is modified (phosphoserine). Phosphoserine; by MAP3K5 is present on serine 401. Serine 413 bears the Phosphoserine mark. In terms of domain architecture, PH spans 462–553 (KMGPVDKRKG…EVWRQQYQSN (92 aa)). A Phosphoserine; by PKC/PRKCQ modification is found at serine 504. At threonine 516 the chain carries Phosphothreonine; by autocatalysis. Serine 532 is subject to Phosphoserine; by PKC/PRKCQ.

The protein belongs to the protein kinase superfamily. AGC Ser/Thr protein kinase family. PDPK1 subfamily. As to quaternary structure, homodimer in its autoinhibited state. Active as monomer. Interacts with NPRL2, PAK1, PTK2B, GRB14, STRAP and IKKB. The Tyr-9 phosphorylated form interacts with SRC, RASA1 and CRK (via their SH2 domains). Interacts with SGK3 in a phosphorylation-dependent manner. The tyrosine-phosphorylated form interacts with PTPN6. The Ser-244 phosphorylated form interacts with YWHAH and YWHAQ. Binds INSR in response to insulin. Interacts (via PH domain) with SMAD3, SMAD4 and SMAD7. Interacts with PKN2; the interaction stimulates PDPK1 autophosphorylation, its PI(3,4,5)P3-dependent kinase activity toward 'Ser-473' of AKT1 but also activates its kinase activity toward PRKCD and PRKCZ. Interacts with PKN1 (via C-terminus) and PPARG. In terms of processing, phosphorylation on Ser-244 in the activation loop is required for full activity. PDPK1 itself can autophosphorylate Ser-244, leading to its own activation. Autophosphorylation is inhibited by the apoptotic C-terminus cleavage product of PKN2. Tyr-9 phosphorylation is critical for stabilization of both PDPK1 and the PDPK1/SRC complex via HSP90-mediated protection of PDPK1 degradation. Angiotensin II stimulates the tyrosine phosphorylation of PDPK1 in vascular smooth muscle in a calcium- and SRC-dependent manner. Phosphorylated on Tyr-9, Tyr-376 and Tyr-379 by INSR in response to insulin. Palmitate negatively regulates autophosphorylation at Ser-244 and palmitate-induced phosphorylation at Ser-532 and Ser-504 by PKC/PRKCQ negatively regulates its ability to phosphorylate PKB/AKT1. Phosphorylation at Thr-357 by MELK partially inhibits kinase activity, the inhibition is cooperatively enhanced by phosphorylation at Ser-397 and Ser-401 by MAP3K5. Monoubiquitinated in the kinase domain, deubiquitinated by USP4. As to expression, highly expressed in heart, brain, liver and testis, also expressed in embryonic cells.

Its subcellular location is the cytoplasm. It is found in the nucleus. The protein localises to the cell membrane. The protein resides in the cell junction. It localises to the focal adhesion. It catalyses the reaction L-seryl-[protein] + ATP = O-phospho-L-seryl-[protein] + ADP + H(+). The catalysed reaction is L-threonyl-[protein] + ATP = O-phospho-L-threonyl-[protein] + ADP + H(+). Its activity is regulated as follows. Homodimerization regulates its activity by maintaining the kinase in an autoinhibitory conformation. NPRL2 down-regulates its activity by interfering with tyrosine phosphorylation at the Tyr-9, Tyr-376 and Tyr-379 residues. The 14-3-3 protein YWHAQ acts as a negative regulator by association with the residues surrounding the Ser-244 residue. STRAP positively regulates its activity by enhancing its autophosphorylation and by stimulating its dissociation from YWHAQ. SMAD2, SMAD3, SMAD4 and SMAD7 also positively regulate its activity by stimulating its dissociation from YWHAQ. Activated by phosphorylation on Tyr-9, Tyr-376 and Tyr-379 by INSR in response to insulin. Serine/threonine kinase which acts as a master kinase, phosphorylating and activating a subgroup of the AGC family of protein kinases. Its targets include: protein kinase B (PKB/AKT1, PKB/AKT2, PKB/AKT3), p70 ribosomal protein S6 kinase (RPS6KB1), p90 ribosomal protein S6 kinase (RPS6KA1, RPS6KA2 and RPS6KA3), cyclic AMP-dependent protein kinase (PRKACA), protein kinase C (PRKCD and PRKCZ), serum and glucocorticoid-inducible kinase (SGK1, SGK2 and SGK3), p21-activated kinase-1 (PAK1), TSSK3, protein kinase PKN (PKN1 and PKN2). Plays a central role in the transduction of signals from insulin by providing the activating phosphorylation to PKB/AKT1, thus propagating the signal to downstream targets controlling cell proliferation and survival, as well as glucose and amino acid uptake and storage. Negatively regulates the TGF-beta-induced signaling by: modulating the association of SMAD3 and SMAD7 with TGF-beta receptor, phosphorylating SMAD2, SMAD3, SMAD4 and SMAD7, preventing the nuclear translocation of SMAD3 and SMAD4 and the translocation of SMAD7 from the nucleus to the cytoplasm in response to TGF-beta. Activates PPARG transcriptional activity and promotes adipocyte differentiation. Activates the NF-kappa-B pathway via phosphorylation of IKKB. The tyrosine phosphorylated form is crucial for the regulation of focal adhesions by angiotensin II. Controls proliferation, survival, and growth of developing pancreatic cells. Participates in the regulation of Ca(2+) entry and Ca(2+)-activated K(+) channels of mast cells. Essential for the motility of vascular endothelial cells (ECs) and is involved in the regulation of their chemotaxis. Plays a critical role in cardiac homeostasis by serving as a dual effector for cell survival and beta-adrenergic response. Plays an important role during thymocyte development by regulating the expression of key nutrient receptors on the surface of pre-T cells and mediating Notch-induced cell growth and proliferative responses. Provides negative feedback inhibition to toll-like receptor-mediated NF-kappa-B activation in macrophages. This is 3-phosphoinositide-dependent protein kinase 1 (Pdpk1) from Mus musculus (Mouse).